Here is a 55-residue protein sequence, read N- to C-terminus: MAKAVTIKIKLVSTADTGFYYVAKKNSRTMTDKMTKKKYDPVARKHVEFKEAKIK.

The protein belongs to the bacterial ribosomal protein bL33 family.

The sequence is that of Large ribosomal subunit protein bL33 from Rhodopseudomonas palustris (strain HaA2).